A 715-amino-acid polypeptide reads, in one-letter code: Fatty acid oxidation complex subunit alpha (715 aa).

The enoyl-CoA hydratase/isomerase stretch occupies residues 1 to 190; that stretch reads MIYEGKAITV…KVGAVDAVVA (190 aa). Residue D297 coordinates substrate. The 3-hydroxyacyl-CoA dehydrogenase stretch occupies residues 312–715; that stretch reads RDVKQAAVLG…MAKNGQSFFG (404 aa). Residues M325, D344, 401–403, K408, and S430 each bind NAD(+); that span reads VVE. The For 3-hydroxyacyl-CoA dehydrogenase activity role is filled by H451. N454 provides a ligand contact to NAD(+). Residues N501 and Y660 each coordinate substrate.

In the N-terminal section; belongs to the enoyl-CoA hydratase/isomerase family. It in the C-terminal section; belongs to the 3-hydroxyacyl-CoA dehydrogenase family. In terms of assembly, heterotetramer of two alpha chains (FadB) and two beta chains (FadA).

It catalyses the reaction a (3S)-3-hydroxyacyl-CoA + NAD(+) = a 3-oxoacyl-CoA + NADH + H(+). It carries out the reaction a (3S)-3-hydroxyacyl-CoA = a (2E)-enoyl-CoA + H2O. The catalysed reaction is a 4-saturated-(3S)-3-hydroxyacyl-CoA = a (3E)-enoyl-CoA + H2O. The enzyme catalyses (3S)-3-hydroxybutanoyl-CoA = (3R)-3-hydroxybutanoyl-CoA. It catalyses the reaction a (3Z)-enoyl-CoA = a 4-saturated (2E)-enoyl-CoA. It carries out the reaction a (3E)-enoyl-CoA = a 4-saturated (2E)-enoyl-CoA. It functions in the pathway lipid metabolism; fatty acid beta-oxidation. Involved in the aerobic and anaerobic degradation of long-chain fatty acids via beta-oxidation cycle. Catalyzes the formation of 3-oxoacyl-CoA from enoyl-CoA via L-3-hydroxyacyl-CoA. It can also use D-3-hydroxyacyl-CoA and cis-3-enoyl-CoA as substrate. The chain is Fatty acid oxidation complex subunit alpha from Pseudomonas fluorescens (strain SBW25).